Reading from the N-terminus, the 581-residue chain is Putative protein phosphatase 2C 22 (581 aa).

Residues 1–21 form the signal peptide; it reads MVISVPLFSSVLLALVVAVPA. Residues 102 to 478 form the PPM-type phosphatase domain; that stretch reads KYASSAMQGL…NNATAILVQF (377 aa). 4 residues coordinate Mn(2+): aspartate 138, glycine 139, aspartate 373, and asparagine 469. Positions 538–563 are disordered; the sequence is SDEVAGGAAVAEQHQHNPEGGGEQQL.

This sequence belongs to the PP2C family. Mg(2+) serves as cofactor. It depends on Mn(2+) as a cofactor.

The enzyme catalyses O-phospho-L-seryl-[protein] + H2O = L-seryl-[protein] + phosphate. It carries out the reaction O-phospho-L-threonyl-[protein] + H2O = L-threonyl-[protein] + phosphate. The chain is Putative protein phosphatase 2C 22 from Oryza sativa subsp. japonica (Rice).